The primary structure comprises 185 residues: MISVNDFRTGLTIEVDGDIWRVMDFQHVKPGKGAAFVRSKLRNLRTGAIQEKTFRAGEKVNRAQIDTRKMQYLYANGDQHVFMDMETYEQIELPAKQIEHELKFLKENMEVYIMMYQGETIGVELPNTVELKVVETEPGIKGDTASGGSKPAKLETGLVVQVPFFVNEGDTLIINTADGTYVSRA.

Belongs to the elongation factor P family.

It localises to the cytoplasm. Its pathway is protein biosynthesis; polypeptide chain elongation. Its function is as follows. Involved in peptide bond synthesis. Stimulates efficient translation and peptide-bond synthesis on native or reconstituted 70S ribosomes in vitro. Probably functions indirectly by altering the affinity of the ribosome for aminoacyl-tRNA, thus increasing their reactivity as acceptors for peptidyl transferase. This is Elongation factor P from Geobacillus sp. (strain WCH70).